The sequence spans 201 residues: UPF0301 protein MSMEG_6921/MSMEI_6732 (201 aa).

This sequence belongs to the UPF0301 (AlgH) family.

The chain is UPF0301 protein MSMEG_6921/MSMEI_6732 from Mycolicibacterium smegmatis (strain ATCC 700084 / mc(2)155) (Mycobacterium smegmatis).